The chain runs to 175 residues: Adenine phosphoribosyltransferase (175 aa).

This sequence belongs to the purine/pyrimidine phosphoribosyltransferase family. As to quaternary structure, homodimer.

It localises to the cytoplasm. The catalysed reaction is AMP + diphosphate = 5-phospho-alpha-D-ribose 1-diphosphate + adenine. It functions in the pathway purine metabolism; AMP biosynthesis via salvage pathway; AMP from adenine: step 1/1. Functionally, catalyzes a salvage reaction resulting in the formation of AMP, that is energically less costly than de novo synthesis. The polypeptide is Adenine phosphoribosyltransferase (Francisella tularensis subsp. tularensis (strain FSC 198)).